The chain runs to 539 residues: MAAKMILFDEEARRALERGVNKLADTVKVTLGPKGRNVVLEKKFGSPQIVNDGVTIAKEIELEDPFENMGAQIVREVASKTNDIAGDGTTTATVLAQAMIREGLKNIAAGANPMILRKGIQKAVDVVVEEIRKMSKKVRGKEDITYVASISAGDEEIGKLVADAMEKVTNDGVITVEESKTTETTLEIVEGMQFDRGYISAYMVTDTERMEAVLDDPYILITDKKISTIQDILPLLEQIVQQGRKLLIIAEDVEGEALATLVVNKLRGTLQCVAVKAPGFGDRRKAMLQDIAILTGGQVISEELGLDLREVKLSQLGRARQVKVQKENTIIVDGAGDPSEIKARIQSIKKQIEETTSDFDREKLQERLAKLAGGVAVIHVGAATETELKEKKLRIEDALAATKAAVEEGIVPGGGTALINAIPALDKLIESLTGDEKTGAMIVRKALEEPLRQIAENAGLDGSVIVNKVKESPAGVGFDALNERFVDMFEAGIVDPTKVTRTAIQNAASAAAMLLTTEAVVAEKPEKEKNPPAPAPDMY.

ATP-binding positions include 30 to 33 (TLGP), 87 to 91 (DGTTT), glycine 414, 479 to 481 (DAL), and aspartate 495.

Belongs to the chaperonin (HSP60) family. As to quaternary structure, forms a cylinder of 14 subunits composed of two heptameric rings stacked back-to-back. Interacts with the co-chaperonin GroES.

The protein localises to the cytoplasm. It carries out the reaction ATP + H2O + a folded polypeptide = ADP + phosphate + an unfolded polypeptide.. In terms of biological role, together with its co-chaperonin GroES, plays an essential role in assisting protein folding. The GroEL-GroES system forms a nano-cage that allows encapsulation of the non-native substrate proteins and provides a physical environment optimized to promote and accelerate protein folding. The protein is Chaperonin GroEL of Caldicellulosiruptor bescii (strain ATCC BAA-1888 / DSM 6725 / KCTC 15123 / Z-1320) (Anaerocellum thermophilum).